Reading from the N-terminus, the 560-residue chain is Putative transport protein VP1232 (560 aa).

The next 5 membrane-spanning stretches (helical) occupy residues 8-28, 37-57, 66-86, 91-111, and 164-184; these read LLDQ…LAIG, LGNS…GFSF, FMLF…GIFF, HYFI…YGLS, and VGYA…AKLL. 2 consecutive RCK C-terminal domains span residues 205–292 and 293–376; these read LGNS…FRNG and KEVF…KIGF. 6 helical membrane-spanning segments follow: residues 386–406, 409–429, 443–463, 478–498, 506–526, and 539–559; these read LLAF…TMTF, VSFS…LGFL, ALNM…GLSA, VIGL…LVGA, ALLF…DVVN, and AGTY…LIIL.

The protein belongs to the AAE transporter (TC 2.A.81) family. YbjL subfamily.

The protein localises to the cell membrane. In Vibrio parahaemolyticus serotype O3:K6 (strain RIMD 2210633), this protein is Putative transport protein VP1232.